We begin with the raw amino-acid sequence, 159 residues long: Transcriptional repressor NrdR (159 aa).

Residues methionine 1–aspartate 21 form a disordered region. The segment at cysteine 3–cysteine 34 is a zinc-finger region. One can recognise an ATP-cone domain in the interval leucine 49 to glutamate 139.

Belongs to the NrdR family. Zn(2+) serves as cofactor.

Negatively regulates transcription of bacterial ribonucleotide reductase nrd genes and operons by binding to NrdR-boxes. The protein is Transcriptional repressor NrdR of Streptococcus thermophilus (strain CNRZ 1066).